Consider the following 294-residue polypeptide: Phosphoribosylaminoimidazole-succinocarboxamide synthase (294 aa).

Belongs to the SAICAR synthetase family.

The enzyme catalyses 5-amino-1-(5-phospho-D-ribosyl)imidazole-4-carboxylate + L-aspartate + ATP = (2S)-2-[5-amino-1-(5-phospho-beta-D-ribosyl)imidazole-4-carboxamido]succinate + ADP + phosphate + 2 H(+). It functions in the pathway purine metabolism; IMP biosynthesis via de novo pathway; 5-amino-1-(5-phospho-D-ribosyl)imidazole-4-carboxamide from 5-amino-1-(5-phospho-D-ribosyl)imidazole-4-carboxylate: step 1/2. In Rhodococcus opacus (strain B4), this protein is Phosphoribosylaminoimidazole-succinocarboxamide synthase.